The sequence spans 132 residues: Small ribosomal subunit protein uS8 (132 aa).

As to quaternary structure, part of the 30S ribosomal subunit. Contacts proteins S5 and S12. In terms of processing, a modified and unmodified form exist; the nature of the modification(s) is unknown.

One of the primary rRNA binding proteins, it binds directly to 16S rRNA central domain where it helps coordinate assembly of the platform of the 30S subunit. The sequence is that of Small ribosomal subunit protein uS8 from Rhodopseudomonas palustris (strain ATCC BAA-98 / CGA009).